We begin with the raw amino-acid sequence, 282 residues long: Halorhodopsin (282 aa).

The Extracellular segment spans residues 1–29; it reads MMETAADALASGTVPLEMTQTQIFEAIQG. The helical transmembrane segment at 30–55 threads the bilayer; it reads DTLLASSLWINIALAGLSILLFVYMG. Residues 56–61 lie on the Cytoplasmic side of the membrane; sequence RNLEDP. A helical transmembrane segment spans residues 62-85; the sequence is RAQLIFVATLMVPLVSISSYTGLV. Residues 86 to 109 are Extracellular-facing; it reads SGLTVSFLEMPAGHALAGQEVLTP. Residues 110–131 form a helical membrane-spanning segment; the sequence is WGRYLTWALSTPMILVALGLLA. Topologically, residues 132 to 134 are cytoplasmic; that stretch reads GSN. The helical transmembrane segment at 135-158 threads the bilayer; it reads ATKLFTAVTADIGMCVTGLAAALT. Residues 159–161 are Extracellular-facing; sequence TSS. A helical membrane pass occupies residues 162 to 184; that stretch reads YLLRWVWYVISCAFFVVVLYVLL. The Cytoplasmic portion of the chain corresponds to 185–196; the sequence is AEWAEDAEVAGT. The chain crosses the membrane as a helical span at residues 197-220; the sequence is AEIFNTLKLLTVVLWLGYPIFWAL. Over 221–229 the chain is Extracellular; the sequence is GAEGLAVLD. Residues 230-258 form a helical membrane-spanning segment; the sequence is VAVTSWAYSGMDIVAKYLFAFLLLRWVVD. N6-(retinylidene)lysine is present on Lys-245. Topologically, residues 259 to 282 are cytoplasmic; the sequence is NERTVAGMAAGLGAPLARCAPADD.

Belongs to the archaeal/bacterial/fungal opsin family.

The protein resides in the cell membrane. Light-driven chloride pump. This chain is Halorhodopsin (hop), found in Halorubrum sodomense.